A 292-amino-acid polypeptide reads, in one-letter code: MEKYSKIEKLGEGTYGIVYKAKNRETGEIVALKRIRLDSEDEGVPCTAIREISLLKELKHPNIVRLHDVIHTERKLTLVFEYLDQDLKKYLDECGGEISKPTIKSFMYQLLKGVAFCHDHRVLHRDLKPQNLLINRKGELKLADFGLARAFGIPVRTYSHEVVTLWYRAPDVLMGSRKYSTPIDIWSAGCIFAEMASGRPLFPGSGTSDQLFRIFKILGTPNEESWPSITELPEYKTDFPVHPAHQLSSIVHGLDEKGLNLLSKMLQYDPNQRITAAAALKHPYFDGLEPIN.

A Protein kinase domain is found at 4-285; it reads YSKIEKLGEG…AAAALKHPYF (282 aa). Residues 10 to 18 and Lys-33 contribute to the ATP site; that span reads LGEGTYGIV. A Phosphothreonine modification is found at Thr-14. Tyr-15 is subject to Phosphotyrosine. Catalysis depends on Asp-126, which acts as the Proton acceptor.

Belongs to the protein kinase superfamily. CMGC Ser/Thr protein kinase family. CDC2/CDKX subfamily.

The enzyme catalyses L-seryl-[protein] + ATP = O-phospho-L-seryl-[protein] + ADP + H(+). It catalyses the reaction L-threonyl-[protein] + ATP = O-phospho-L-threonyl-[protein] + ADP + H(+). Its activity is regulated as follows. Phosphorylation at Thr-14 or Tyr-15 inactivates the enzyme. This Dictyostelium discoideum (Social amoeba) protein is Cyclin-dependent kinase 5 homolog (cdk5).